An 85-amino-acid chain; its full sequence is Small ribosomal subunit protein uS17 (85 aa).

Belongs to the universal ribosomal protein uS17 family. Part of the 30S ribosomal subunit.

In terms of biological role, one of the primary rRNA binding proteins, it binds specifically to the 5'-end of 16S ribosomal RNA. In Trichlorobacter lovleyi (strain ATCC BAA-1151 / DSM 17278 / SZ) (Geobacter lovleyi), this protein is Small ribosomal subunit protein uS17.